The following is a 309-amino-acid chain: Ribosomal protein L11 methyltransferase (309 aa).

Residues Thr-144, Gly-165, Asp-187, and Asn-235 each coordinate S-adenosyl-L-methionine.

The protein belongs to the methyltransferase superfamily. PrmA family.

The protein localises to the cytoplasm. The catalysed reaction is L-lysyl-[protein] + 3 S-adenosyl-L-methionine = N(6),N(6),N(6)-trimethyl-L-lysyl-[protein] + 3 S-adenosyl-L-homocysteine + 3 H(+). Methylates ribosomal protein L11. In Prochlorococcus marinus (strain MIT 9215), this protein is Ribosomal protein L11 methyltransferase.